The following is a 249-amino-acid chain: Proteasome subunit alpha type-3 (249 aa).

N-acetylserine is present on Ser-2. An O-acetylserine mark is found at Ser-214 and Ser-220. A Glycyl lysine isopeptide (Lys-Gly) (interchain with G-Cter in ubiquitin) cross-link involves residue Lys-221.

It belongs to the peptidase T1A family. Component of the 20S core complex of the 26S proteasome. The 26S proteasome is composed of a core protease (CP), known as the 20S proteasome, capped at one or both ends by the 19S regulatory particle (RP/PA700). The 20S proteasome core is composed of 28 subunits that are arranged in four stacked rings, resulting in a barrel-shaped structure. The two end rings are each formed by seven alpha subunits, and the two central rings are each formed by seven beta subunits. The catalytic chamber with the active sites is on the inside of the barrel. Ubiquitous low levels.

Its subcellular location is the cytoplasm. The protein localises to the nucleus. In terms of biological role, the proteasome is a multicatalytic proteinase complex which is characterized by its ability to cleave peptides with Arg, Phe, Tyr, Leu, and Glu adjacent to the leaving group at neutral or slightly basic pH. The proteasome has an ATP-dependent proteolytic activity. This chain is Proteasome subunit alpha type-3 (PAG1), found in Arabidopsis thaliana (Mouse-ear cress).